The chain runs to 317 residues: Melanocyte-stimulating hormone receptor (317 aa).

Over 1-37 the chain is Extracellular; it reads MSVQGPQRRLLGSVNSTSPAAPRLGLAANQTGPRCLE. Residues Asn15 and Asn29 are each glycosylated (N-linked (GlcNAc...) asparagine). The helical transmembrane segment at 38-63 threads the bilayer; it reads VSVPDGLFLSLGLVSVVENVLVVAAI. The Cytoplasmic portion of the chain corresponds to 64 to 72; sequence AKNRNLHSP. Residues 73-93 form a helical membrane-spanning segment; that stretch reads MYYFICCLAVSDLLVSVSSVL. Residues 94–118 lie on the Extracellular side of the membrane; that stretch reads ETAVMLLLEAGTLAGRAAVVQQLDD. The helical transmembrane segment at 119–140 threads the bilayer; the sequence is IIDVLVCGAMVSSLCFLGAIAV. Over 141–163 the chain is Cytoplasmic; that stretch reads DRYISIFYALRYHSIVTLPRAWR. Residues 164 to 183 traverse the membrane as a helical segment; the sequence is AISAIWVASVLSSTLFIAYY. Topologically, residues 184-191 are extracellular; sequence DHTAVLLC. Residues 192–211 form a helical membrane-spanning segment; sequence LVSFFVAMLVLMAVLYVHML. The Cytoplasmic portion of the chain corresponds to 212 to 240; that stretch reads ARACQHARGIARLHKRQRPVHQGLGLKGA. Residues 241–266 form a helical membrane-spanning segment; that stretch reads ATLTILLGIFFLCWGPFFLHLSLMVL. The Extracellular portion of the chain corresponds to 267 to 279; the sequence is CPRHPICGCVFKN. A helical membrane pass occupies residues 280-300; sequence FNLFLTLIICNSIVDPLIYAF. Topologically, residues 301–317 are cytoplasmic; it reads RSQELRKTLREVLLCSW. The S-palmitoyl cysteine moiety is linked to residue Cys315.

It belongs to the G-protein coupled receptor 1 family. As to quaternary structure, interacts with MGRN1, but does not undergo MGRN1-mediated ubiquitination; this interaction competes with GNAS-binding and thus inhibits agonist-induced cAMP production. Interacts with OPN3; the interaction results in a decrease in MC1R-mediated cAMP signaling and ultimately a decrease in melanin production in melanocytes.

The protein localises to the cell membrane. Receptor for MSH (alpha, beta and gamma) and ACTH. The activity of this receptor is mediated by G proteins which activate adenylate cyclase. Mediates melanogenesis, the production of eumelanin (black/brown) and phaeomelanin (red/yellow), via regulation of cAMP signaling in melanocytes. In Puma yagouaroundi (Jaguarundi), this protein is Melanocyte-stimulating hormone receptor (MC1R).